Here is a 267-residue protein sequence, read N- to C-terminus: Nanos homolog 1 (267 aa).

The tract at residues 40 to 56 (FSSWNDYLGLATLITRA) is essential for its translational repressor activity. Residues 57-94 (SDRGSPHEGPGPTAAGPTMGPPEDDEDDDGEEPEAGGR) are disordered. Over residues 78–90 (PEDDEDDDGEEPE) the composition is skewed to acidic residues. A Nanos-type zinc finger spans residues 188–242 (VCVFCRNNKEAVALYTTHILKGPDGRVLCPVLRRYTCPLCGASGDNAHTIKYCPL). Positions 189, 192, 205, 216, 224, 227, 235, and 240 each coordinate Zn(2+). Short sequence motifs (C2HC) lie at residues 189-216 (CVFC…RVLC) and 224-240 (CPLC…IKYC). The segment at 243 to 267 (SKVPPPTVRPPPRSNRDSLPSKKLR) is disordered. The span at 244-255 (KVPPPTVRPPPR) shows a compositional bias: pro residues. Positions 256–267 (SNRDSLPSKKLR) are enriched in basic and acidic residues.

It belongs to the nanos family. Interacts with PUM2, SNAPIN and CTNNB1. Interacts (via N-terminal region) with CTNND1. Interacts with DDX20 (via N-terminal region). In terms of tissue distribution, expressed in the oocyte. Transiently expressed in eight-cell embryos. At 12.5 dpc, it is re-expressed in the central nervous system and the expression continues in the adult brain, in which the hippocampal formation is the predominant region. Expressed in the seminiferous tubules of mature testis, but not in the primordial germ cells.

It is found in the cytoplasm. The protein resides in the perinuclear region. Its function is as follows. May act as a translational repressor which regulates translation of specific mRNAs by forming a complex with PUM2 that associates with the 3'-UTR of mRNA targets. Capable of interfering with the proadhesive and anti-invasive functions of E-cadherin. Up-regulates the production of MMP14 to promote tumor cell invasion. Not essential for normal development. This chain is Nanos homolog 1 (Nanos1), found in Mus musculus (Mouse).